Reading from the N-terminus, the 376-residue chain is DNA replication and repair protein RecF (376 aa).

Residue 35-42 coordinates ATP; it reads GDNGSGKT.

It belongs to the RecF family.

It localises to the cytoplasm. Its function is as follows. The RecF protein is involved in DNA metabolism; it is required for DNA replication and normal SOS inducibility. RecF binds preferentially to single-stranded, linear DNA. It also seems to bind ATP. The protein is DNA replication and repair protein RecF of Agrobacterium fabrum (strain C58 / ATCC 33970) (Agrobacterium tumefaciens (strain C58)).